Reading from the N-terminus, the 380-residue chain is Queuine tRNA-ribosyltransferase (380 aa).

Asp96 functions as the Proton acceptor in the catalytic mechanism. Substrate is bound by residues 96–100, Asp150, Gln193, and Gly220; that span reads DSGGF. The RNA binding stretch occupies residues 251-257; that stretch reads GVGAPDS. The active-site Nucleophile is the Asp270. An RNA binding; important for wobble base 34 recognition region spans residues 275-279; that stretch reads TRIAR. Residues Cys308, Cys310, Cys313, and His339 each coordinate Zn(2+).

Belongs to the queuine tRNA-ribosyltransferase family. Homodimer. Within each dimer, one monomer is responsible for RNA recognition and catalysis, while the other monomer binds to the replacement base PreQ1. Requires Zn(2+) as cofactor.

The catalysed reaction is 7-aminomethyl-7-carbaguanine + guanosine(34) in tRNA = 7-aminomethyl-7-carbaguanosine(34) in tRNA + guanine. It functions in the pathway tRNA modification; tRNA-queuosine biosynthesis. In terms of biological role, catalyzes the base-exchange of a guanine (G) residue with the queuine precursor 7-aminomethyl-7-deazaguanine (PreQ1) at position 34 (anticodon wobble position) in tRNAs with GU(N) anticodons (tRNA-Asp, -Asn, -His and -Tyr). Catalysis occurs through a double-displacement mechanism. The nucleophile active site attacks the C1' of nucleotide 34 to detach the guanine base from the RNA, forming a covalent enzyme-RNA intermediate. The proton acceptor active site deprotonates the incoming PreQ1, allowing a nucleophilic attack on the C1' of the ribose to form the product. After dissociation, two additional enzymatic reactions on the tRNA convert PreQ1 to queuine (Q), resulting in the hypermodified nucleoside queuosine (7-(((4,5-cis-dihydroxy-2-cyclopenten-1-yl)amino)methyl)-7-deazaguanosine). The polypeptide is Queuine tRNA-ribosyltransferase (Streptococcus sanguinis (strain SK36)).